The chain runs to 375 residues: Platelet-derived growth factor receptor-like protein (375 aa).

The signal sequence occupies residues 1 to 17; that stretch reads MKVWLLLGLLLLHEALG. Residues 19–63 are disordered; it reads VAGQHPPKNKRPKEQGENRIKPTNKKAKPKIPKIKDRDTADSAPK. The segment covering 40–50 has biased composition (basic residues); sequence PTNKKAKPKIP. The Ig-like C2-type 1 domain maps to 62 to 159; that stretch reads PKSQSIMMQA…GYICRRDEAR (98 aa). The cysteines at positions 96 and 143 are disulfide-linked. N-linked (GlcNAc...) asparagine glycosylation occurs at Asn219. An Ig-like C2-type 2 domain is found at 272-375; it reads PSTTILASSN…TTVATTVEFS (104 aa). The cysteines at positions 293 and 357 are disulfide-linked.

As to quaternary structure, forms a complex composed of PDGFRL, TNK2 and GRB2.

Its subcellular location is the secreted. The protein is Platelet-derived growth factor receptor-like protein (Pdgfrl) of Rattus norvegicus (Rat).